The chain runs to 75 residues: DNA-directed RNA polymerase subunit omega (75 aa).

Belongs to the RNA polymerase subunit omega family. As to quaternary structure, in cyanobacteria the RNAP catalytic core is composed of 2 alpha, 1 beta, 1 beta', 1 gamma and 1 omega subunit. When a sigma factor is associated with the core the holoenzyme is formed, which can initiate transcription.

The enzyme catalyses RNA(n) + a ribonucleoside 5'-triphosphate = RNA(n+1) + diphosphate. Its function is as follows. Promotes RNA polymerase assembly. Latches the N- and C-terminal regions of the beta' subunit thereby facilitating its interaction with the beta and alpha subunits. The protein is DNA-directed RNA polymerase subunit omega of Microcystis aeruginosa (strain NIES-843 / IAM M-2473).